Here is a 95-residue protein sequence, read N- to C-terminus: ESAT-6-like protein EsxA (95 aa).

It belongs to the WXG100 family. ESAT-6 subfamily. As to quaternary structure, forms a tight 1:1 complex with EsxB.

In Corynebacterium diphtheriae (strain ATCC 700971 / NCTC 13129 / Biotype gravis), this protein is ESAT-6-like protein EsxA.